Consider the following 420-residue polypeptide: MTTLDAVVYGADELVAGPATDGRRLETYEDGAVAIVDGTVAAVGPTTEVTAEYPPESANHAVDADGQAVIPGFVDPHTHALFAGDRSDEFAAKLRGKSYQDILAEGGGILRTVRAVRDADEETLLSNLLAHLDTMLAHGTTTVEVKSGYGLDTETELQMLRVIDSADAVHPVDVVPTFMGAHAVPEGWDTDDYTAAVVDEQVPAVESQGIAEFCDVFCEEGVFSVAQSRRVLEAGAAAGLTPKVHAEELAHIGGTQLAADVGAASADHLLHATGEDIDALVDAAVTPVLLPGTAFGLGAAYADATAFRDRGAPVAVATDFNPNCHSHSMGFALSLACVEMGLTPAEALIAGTKHAALALDRTDGLGTLREGAPGDAVVLAAPSHVHIPYQYGTNVVDAILKDGSVVSTPTHESYDREVQP.

Fe(3+) contacts are provided by His77 and His79. His77 and His79 together coordinate Zn(2+). Positions 86, 149, and 182 each coordinate 4-imidazolone-5-propanoate. Tyr149 is a binding site for N-formimidoyl-L-glutamate. His245 is a Fe(3+) binding site. His245 is a binding site for Zn(2+). Glu248 is a binding site for 4-imidazolone-5-propanoate. Asp319 serves as a coordination point for Fe(3+). Asp319 lines the Zn(2+) pocket. Asn321 contacts N-formimidoyl-L-glutamate.

This sequence belongs to the metallo-dependent hydrolases superfamily. HutI family. The cofactor is Zn(2+). Requires Fe(3+) as cofactor.

It localises to the cytoplasm. The catalysed reaction is 4-imidazolone-5-propanoate + H2O = N-formimidoyl-L-glutamate. Its pathway is amino-acid degradation; L-histidine degradation into L-glutamate; N-formimidoyl-L-glutamate from L-histidine: step 3/3. Its function is as follows. Catalyzes the hydrolytic cleavage of the carbon-nitrogen bond in imidazolone-5-propanoate to yield N-formimidoyl-L-glutamate. It is the third step in the universal histidine degradation pathway. This is Imidazolonepropionase from Haloarcula marismortui (strain ATCC 43049 / DSM 3752 / JCM 8966 / VKM B-1809) (Halobacterium marismortui).